The primary structure comprises 403 residues: Eukaryotic translation initiation factor 3 subunit H (403 aa).

The 150-residue stretch at 57–206 (VRLDGLALTK…VKAYRLSPSF (150 aa)) folds into the MPN domain. The tract at residues 99–122 (ALPNPGRSNSERDEEEDRSSRNAT) is disordered.

Belongs to the eIF-3 subunit H family. Component of the eukaryotic translation initiation factor 3 (eIF-3) complex.

The protein localises to the cytoplasm. Its function is as follows. Component of the eukaryotic translation initiation factor 3 (eIF-3) complex, which is involved in protein synthesis of a specialized repertoire of mRNAs and, together with other initiation factors, stimulates binding of mRNA and methionyl-tRNAi to the 40S ribosome. The eIF-3 complex specifically targets and initiates translation of a subset of mRNAs involved in cell proliferation. The chain is Eukaryotic translation initiation factor 3 subunit H from Mycosarcoma maydis (Corn smut fungus).